We begin with the raw amino-acid sequence, 734 residues long: Probable inactive histone-lysine N-methyltransferase SUVR1 (734 aa).

The interval 61–163 (QSTEKNKKEE…LPPLKRYVRR (103 aa)) is disordered. Residues 62 to 81 (STEKNKKEEEKKKKEEEKKS) show a composition bias toward basic and acidic residues. Residues 98–109 (VQDEEDDMDEDE) show a composition bias toward acidic residues. A compositionally biased stretch (basic residues) spans 113-122 (KRRLRSRRGR). Residues 123-132 (ASSSSSSSSS) are compositionally biased toward low complexity. Zn(2+) contacts are provided by C460, C464, C468, C477, C545, C549, C551, and C555. Positions 460–563 (CSTSCIEDCL…RCGNRVVQRG (104 aa)) constitute a Pre-SET domain. The SET domain maps to 566–696 (NKLQVFFTPN…AMEELAWDYG (131 aa)). Residues 577–579 (KGW) and 652–653 (NH) each bind S-adenosyl-L-methionine. C655 is a binding site for Zn(2+). An S-adenosyl-L-methionine-binding site is contributed by Y695. A Post-SET domain is found at 707–723 (KPFDCLCGSRFCRNKKR). Zn(2+)-binding residues include C711, C713, and C718.

It belongs to the class V-like SAM-binding methyltransferase superfamily. Histone-lysine methyltransferase family. Interacts with SUVR2 and itself.

It localises to the nucleus. It is found in the chromosome. Probable inactive histone-lysine methyltransferase that acts as regulator of transctiptional gene silencing independently of histone H3K9 methylation. Contributes to transcriptional gene silencing at RNA-directed DNA methylation (RdDM) target loci but also at RdDM-independent target loci. This Arabidopsis thaliana (Mouse-ear cress) protein is Probable inactive histone-lysine N-methyltransferase SUVR1 (SUVR1).